The sequence spans 438 residues: uncharacterized protein (438 aa).

This is an uncharacterized protein from Acanthamoeba polyphaga mimivirus (APMV).